We begin with the raw amino-acid sequence, 156 residues long: Arginine repressor (156 aa).

The protein belongs to the ArgR family.

The protein resides in the cytoplasm. It functions in the pathway amino-acid biosynthesis; L-arginine biosynthesis [regulation]. Regulates arginine biosynthesis genes. The sequence is that of Arginine repressor from Aliivibrio fischeri (strain ATCC 700601 / ES114) (Vibrio fischeri).